We begin with the raw amino-acid sequence, 323 residues long: o-succinylbenzoate synthase (323 aa).

The active-site Proton donor is the K134. The Mg(2+) site is built by D162, E191, and D214. K236 serves as the catalytic Proton acceptor.

This sequence belongs to the mandelate racemase/muconate lactonizing enzyme family. MenC type 1 subfamily. The cofactor is a divalent metal cation.

The enzyme catalyses (1R,6R)-6-hydroxy-2-succinyl-cyclohexa-2,4-diene-1-carboxylate = 2-succinylbenzoate + H2O. It functions in the pathway quinol/quinone metabolism; 1,4-dihydroxy-2-naphthoate biosynthesis; 1,4-dihydroxy-2-naphthoate from chorismate: step 4/7. It participates in quinol/quinone metabolism; menaquinone biosynthesis. In terms of biological role, converts 2-succinyl-6-hydroxy-2,4-cyclohexadiene-1-carboxylate (SHCHC) to 2-succinylbenzoate (OSB). In Yersinia pseudotuberculosis serotype O:3 (strain YPIII), this protein is o-succinylbenzoate synthase.